Consider the following 190-residue polypeptide: dTTP/UTP pyrophosphatase (190 aa).

Asp71 functions as the Proton acceptor in the catalytic mechanism.

Belongs to the Maf family. YhdE subfamily. A divalent metal cation is required as a cofactor.

The protein resides in the cytoplasm. The catalysed reaction is dTTP + H2O = dTMP + diphosphate + H(+). It catalyses the reaction UTP + H2O = UMP + diphosphate + H(+). Functionally, nucleoside triphosphate pyrophosphatase that hydrolyzes dTTP and UTP. May have a dual role in cell division arrest and in preventing the incorporation of modified nucleotides into cellular nucleic acids. In Xanthomonas euvesicatoria pv. vesicatoria (strain 85-10) (Xanthomonas campestris pv. vesicatoria), this protein is dTTP/UTP pyrophosphatase.